The sequence spans 244 residues: NAD(P)H-quinone oxidoreductase subunit K (244 aa).

The [4Fe-4S] cluster site is built by C60, C61, C125, and C156.

This sequence belongs to the complex I 20 kDa subunit family. In terms of assembly, NDH-1 can be composed of about 15 different subunits; different subcomplexes with different compositions have been identified which probably have different functions. Requires [4Fe-4S] cluster as cofactor.

The protein resides in the cellular thylakoid membrane. It carries out the reaction a plastoquinone + NADH + (n+1) H(+)(in) = a plastoquinol + NAD(+) + n H(+)(out). The catalysed reaction is a plastoquinone + NADPH + (n+1) H(+)(in) = a plastoquinol + NADP(+) + n H(+)(out). Functionally, NDH-1 shuttles electrons from an unknown electron donor, via FMN and iron-sulfur (Fe-S) centers, to quinones in the respiratory and/or the photosynthetic chain. The immediate electron acceptor for the enzyme in this species is believed to be plastoquinone. Couples the redox reaction to proton translocation, and thus conserves the redox energy in a proton gradient. Cyanobacterial NDH-1 also plays a role in inorganic carbon-concentration. The sequence is that of NAD(P)H-quinone oxidoreductase subunit K from Prochlorococcus marinus (strain AS9601).